Here is a 105-residue protein sequence, read N- to C-terminus: Large ribosomal subunit protein uL24 (105 aa).

It belongs to the universal ribosomal protein uL24 family. In terms of assembly, part of the 50S ribosomal subunit.

In terms of biological role, one of two assembly initiator proteins, it binds directly to the 5'-end of the 23S rRNA, where it nucleates assembly of the 50S subunit. Its function is as follows. One of the proteins that surrounds the polypeptide exit tunnel on the outside of the subunit. This is Large ribosomal subunit protein uL24 from Clostridium botulinum (strain ATCC 19397 / Type A).